Consider the following 142-residue polypeptide: MYKTIIMPVDVFEMELSDKAVRHAEFLAQDDGVIHLLHVLPGSASLSLHRFAADVRRFEEHLQHEAEERLQTMVSHFTIDPSRIKQHVRFGSVRDEVNELAEELGADVVVIGSRNPSISTHLLGSNASSVIRHANLPVLVVR.

Belongs to the universal stress protein A family.

In Escherichia coli O157:H7, this protein is Universal stress protein G (uspG).